A 180-amino-acid chain; its full sequence is ATP-dependent protease subunit HslV (180 aa).

The active site involves T7. Na(+) contacts are provided by A162, C165, and T168.

It belongs to the peptidase T1B family. HslV subfamily. As to quaternary structure, a double ring-shaped homohexamer of HslV is capped on each side by a ring-shaped HslU homohexamer. The assembly of the HslU/HslV complex is dependent on binding of ATP.

The protein localises to the cytoplasm. The catalysed reaction is ATP-dependent cleavage of peptide bonds with broad specificity.. Allosterically activated by HslU binding. Its function is as follows. Protease subunit of a proteasome-like degradation complex believed to be a general protein degrading machinery. The polypeptide is ATP-dependent protease subunit HslV (Dichelobacter nodosus (strain VCS1703A)).